Here is a 190-residue protein sequence, read N- to C-terminus: Xanthine phosphoribosyltransferase 1 (190 aa).

Xanthine-binding residues include Leu-20 and Asn-27. Residue 128–132 (ANGEA) coordinates 5-phospho-alpha-D-ribose 1-diphosphate. Lys-156 serves as a coordination point for xanthine.

The protein belongs to the purine/pyrimidine phosphoribosyltransferase family. Xpt subfamily. As to quaternary structure, homodimer.

It is found in the cytoplasm. It catalyses the reaction XMP + diphosphate = xanthine + 5-phospho-alpha-D-ribose 1-diphosphate. It participates in purine metabolism; XMP biosynthesis via salvage pathway; XMP from xanthine: step 1/1. Its function is as follows. Converts the preformed base xanthine, a product of nucleic acid breakdown, to xanthosine 5'-monophosphate (XMP), so it can be reused for RNA or DNA synthesis. This chain is Xanthine phosphoribosyltransferase 1, found in Clostridium botulinum (strain ATCC 19397 / Type A).